Here is a 437-residue protein sequence, read N- to C-terminus: Testis-specific Y-encoded-like protein 1 (437 aa).

The segment at 1-81 (MSGLDGVKRT…QDAAGRGGTP (81 aa)) is disordered. Over residues 11 to 26 (TPLQTHSIIISDQVPS) the composition is skewed to polar residues. A compositionally biased stretch (basic and acidic residues) spans 28 to 40 (QDAHQYLRLRDQS). Lys156 is covalently cross-linked (Glycyl lysine isopeptide (Lys-Gly) (interchain with G-Cter in SUMO2)).

This sequence belongs to the nucleosome assembly protein (NAP) family. Post-translationally, ubiquitinated by the CRL2(APPBP2) complex, which recognizes the Arg-Xaa-Xaa-Gly sequence at the C-terminus, leading to its degradation. In terms of tissue distribution, expressed in testis, ovary, liver, spleen, brain, kidney, prostate, lung, liver, and heart.

The protein localises to the nucleus. It is found in the nucleolus. This Homo sapiens (Human) protein is Testis-specific Y-encoded-like protein 1 (TSPYL1).